Reading from the N-terminus, the 257-residue chain is Ribonuclease HII (257 aa).

The region spanning 72 to 257 (TYIAGIDEVG…FAPIKDMIQK (186 aa)) is the RNase H type-2 domain. 3 residues coordinate a divalent metal cation: Asp-78, Glu-79, and Asp-170.

It belongs to the RNase HII family. The cofactor is Mn(2+). It depends on Mg(2+) as a cofactor.

The protein localises to the cytoplasm. It catalyses the reaction Endonucleolytic cleavage to 5'-phosphomonoester.. Functionally, endonuclease that specifically degrades the RNA of RNA-DNA hybrids. The chain is Ribonuclease HII from Bacillus cereus (strain G9842).